Here is a 437-residue protein sequence, read N- to C-terminus: Phosphomethylpyrimidine synthase (437 aa).

Substrate is bound by residues asparagine 69, methionine 98, tyrosine 127, histidine 163, serine 185 to glycine 187, aspartate 226 to arginine 229, and glutamate 265. Histidine 269 is a binding site for Zn(2+). Residue tyrosine 292 participates in substrate binding. Histidine 333 contacts Zn(2+). The [4Fe-4S] cluster site is built by cysteine 409, cysteine 412, and cysteine 416.

The protein belongs to the ThiC family. [4Fe-4S] cluster is required as a cofactor.

The enzyme catalyses 5-amino-1-(5-phospho-beta-D-ribosyl)imidazole + S-adenosyl-L-methionine = 4-amino-2-methyl-5-(phosphooxymethyl)pyrimidine + CO + 5'-deoxyadenosine + formate + L-methionine + 3 H(+). Its pathway is cofactor biosynthesis; thiamine diphosphate biosynthesis. In terms of biological role, catalyzes the synthesis of the hydroxymethylpyrimidine phosphate (HMP-P) moiety of thiamine from aminoimidazole ribotide (AIR) in a radical S-adenosyl-L-methionine (SAM)-dependent reaction. The polypeptide is Phosphomethylpyrimidine synthase (Clostridium botulinum (strain Langeland / NCTC 10281 / Type F)).